Reading from the N-terminus, the 249-residue chain is Eukaryotic translation initiation factor 3 subunit J-A (249 aa).

Acidic residues predominate over residues 1–15; it reads MADADSWDADSFEPE. The tract at residues 1-104 is disordered; it reads MADADSWDAD…DTPLTPEDEL (104 aa). Residues 16-27 show a composition bias toward basic and acidic residues; the sequence is EPIKKAAVHDKW. Residues 28–52 show a composition bias toward acidic residues; that stretch reads EGEDEDDDVKDNWDDDEEEEKEEEE. The stretch at 34-96 forms a coiled coil; that stretch reads DDVKDNWDDD…QQLEETKRDT (63 aa). Positions 53-96 are enriched in basic and acidic residues; it reads EKKTEAKPTEKKKLSEKIKEKENLQRKKQEELRKQQLEETKRDT.

This sequence belongs to the eIF-3 subunit J family. In terms of assembly, component of the eukaryotic translation initiation factor 3 (eIF-3) complex, which is composed of 13 subunits: eif3a, eif3b, eif3c, eif3d, eif3e, eif3f, eif3g, eif3h, eif3i, eif3j, eif3k, eif3l and eif3m.

The protein resides in the cytoplasm. Functionally, component of the eukaryotic translation initiation factor 3 (eIF-3) complex, which is involved in protein synthesis of a specialized repertoire of mRNAs and, together with other initiation factors, stimulates binding of mRNA and methionyl-tRNAi to the 40S ribosome. The eIF-3 complex specifically targets and initiates translation of a subset of mRNAs involved in cell proliferation. This Danio rerio (Zebrafish) protein is Eukaryotic translation initiation factor 3 subunit J-A (eif3ja).